Reading from the N-terminus, the 463-residue chain is GTPase Der (463 aa).

Residues 1–20 (MDEGDEDLISGRGFTEGARK) are disordered. EngA-type G domains lie at 27 to 190 (GVLA…KQAE) and 202 to 375 (RRVA…ESWD). Residues 33–40 (GRPNVGKS), 80–84 (DTGGW), 142–145 (NKID), 208–215 (GRPNVGKS), 255–259 (DTAGI), and 320–323 (NKWD) contribute to the GTP site. Residues 376 to 458 (QRIPTGKLNA…PIQISVNIRE (83 aa)) form the KH-like domain.

It belongs to the TRAFAC class TrmE-Era-EngA-EngB-Septin-like GTPase superfamily. EngA (Der) GTPase family. Associates with the 50S ribosomal subunit.

In terms of biological role, GTPase that plays an essential role in the late steps of ribosome biogenesis. The polypeptide is GTPase Der (Bifidobacterium longum (strain NCC 2705)).